The primary structure comprises 26 residues: Guentherin (26 aa).

As to expression, expressed by the skin glands.

The protein resides in the secreted. In terms of biological role, antimicrobial peptide. Active against the Gram-positive bacteria S.aureus FDA209P (MIC=35.5 ug/ml) and B.subtilis ATCC 6633 (MIC&gt;64 ug/ml), but not active against the Gram-negative bacterium E.coli or the fungus C.albicans. The protein is Guentherin of Sylvirana guentheri (Gunther's frog).